The sequence spans 282 residues: tRNA (guanine-N(1)-)-methyltransferase (282 aa).

145-150 (IGDYVL) contacts S-adenosyl-L-methionine.

The protein belongs to the RNA methyltransferase TrmD family. As to quaternary structure, homodimer.

The protein localises to the cytoplasm. The catalysed reaction is guanosine(37) in tRNA + S-adenosyl-L-methionine = N(1)-methylguanosine(37) in tRNA + S-adenosyl-L-homocysteine + H(+). Functionally, specifically methylates guanosine-37 in various tRNAs. This Streptomyces avermitilis (strain ATCC 31267 / DSM 46492 / JCM 5070 / NBRC 14893 / NCIMB 12804 / NRRL 8165 / MA-4680) protein is tRNA (guanine-N(1)-)-methyltransferase.